A 549-amino-acid polypeptide reads, in one-letter code: Arginine--tRNA ligase (549 aa).

The 'HIGH' region motif lies at 113–123 (ANPDGPLHIGH).

This sequence belongs to the class-I aminoacyl-tRNA synthetase family.

The protein localises to the cytoplasm. The catalysed reaction is tRNA(Arg) + L-arginine + ATP = L-arginyl-tRNA(Arg) + AMP + diphosphate. This Archaeoglobus fulgidus (strain ATCC 49558 / DSM 4304 / JCM 9628 / NBRC 100126 / VC-16) protein is Arginine--tRNA ligase (argS).